Consider the following 199-residue polypeptide: Protein MM_0484 (199 aa).

The 192-residue stretch at Thr-5–Glu-196 folds into the AMMECR1 domain.

This is Protein MM_0484 from Methanosarcina mazei (strain ATCC BAA-159 / DSM 3647 / Goe1 / Go1 / JCM 11833 / OCM 88) (Methanosarcina frisia).